The sequence spans 2571 residues: Highly reducing polyketide synthase 19 (2571 aa).

A disordered region spans residues 1–51 (MSPIFLGDSEDAATCRCGPPSSPSPELSGTETALTSDSDGPELLNPGPQGP). A compositionally biased stretch (polar residues) spans 27 to 38 (LSGTETALTSDS). Positions 51–485 (PEPIAIIGMG…GANAHCILES (435 aa)) constitute a Ketosynthase family 3 (KS3) domain. Active-site for beta-ketoacyl synthase activity residues include Cys-224, His-359, and His-398. The malonyl-CoA:ACP transacylase (MAT) domain stretch occupies residues 609-932 (VFTGQGAQWA…PYNSALLRGK (324 aa)). Ser-701 functions as the For malonyltransferase activity in the catalytic mechanism. The segment at 1019 to 1163 (HDLLGSRVPG…GLVKLTQNED (145 aa)) is N-terminal hotdog fold. The tract at residues 1019–1340 (HDLLGSRVPG…SGCRMVPYSS (322 aa)) is dehydratase (DH) domain. Residues 1019-1344 (HDLLGSRVPG…MVPYSSGTAV (326 aa)) enclose the PKS/mFAS DH domain. The active-site Proton acceptor; for dehydratase activity is the His-1051. The C-terminal hotdog fold stretch occupies residues 1177–1344 (MEQSAPRTWY…MVPYSSGTAV (168 aa)). Asp-1241 (proton donor; for dehydratase activity) is an active-site residue. The interval 1800–2140 (NMSDAFVFTR…AFRALSGSTT (341 aa)) is enoyl reductase (ER) domain. The interval 2177 to 2355 (SYLLVGCLGG…ATSVGLGMIS (179 aa)) is ketoreductase (KR) domain. One can recognise a Carrier domain in the interval 2490 to 2568 (AVAAQALELV…MLSELIAGKL (79 aa)). Ser-2527 bears the O-(pantetheine 4'-phosphoryl)serine mark.

The protein operates within polyketide biosynthesis. Functionally, highly reducing polyketide synthase; part of the gene cluster that mediates the biosynthesis of pyriculol and pyriculariol, two heptaketides that induce lesion formation upon application on rice leaves but are dispensable for pathogenicity. The highly reducing polyketide synthase synthesizes the heptaketide backbone of pyriculol and pyriculariol. Pyriculol and pyriculariol contain several hydroxyl moieties and double bonds, so it can be assumed that several reduction steps occur during biosynthesis. These reactions could be executed by PKS19 itself or partly by the tailoring enzymes OXR1, PXR2, RED1, RED2 or RED3, identified within the cluster. The FAD-linked oxidoreductase OXR1 is the only tailoring enzyme for which the function has been determined yet, and is involved in the oxidation of dihydropyriculol and dihydropyriculariol into pyriculol and pyriculariol, respectively. The sequence is that of Highly reducing polyketide synthase 19 from Pyricularia oryzae (strain 70-15 / ATCC MYA-4617 / FGSC 8958) (Rice blast fungus).